Consider the following 159-residue polypeptide: Transcriptional repressor NrdR (159 aa).

A zinc finger lies at 3 to 34 (CPFCRHDDTQVVDSRVSEDGAAIRRRRRCSAC). An ATP-cone domain is found at 49-139 (PAVVKKDGSR…VYRRFEDVSE (91 aa)).

Belongs to the NrdR family. The cofactor is Zn(2+).

Its function is as follows. Negatively regulates transcription of bacterial ribonucleotide reductase nrd genes and operons by binding to NrdR-boxes. This Burkholderia cenocepacia (strain HI2424) protein is Transcriptional repressor NrdR.